Consider the following 617-residue polypeptide: V-type proton ATPase catalytic subunit A (617 aa).

ATP is bound at residue 257–264 (GAFGCGKT).

The protein belongs to the ATPase alpha/beta chains family. As to quaternary structure, V-ATPase is a heteromultimeric enzyme composed of a peripheral catalytic V1 complex (components A to H) attached to an integral membrane V0 proton pore complex (components: a, c, c', c'', d, e, f and VOA1). Post-translationally, is a probable target for sumoylation.

The protein resides in the vacuole membrane. The catalysed reaction is ATP + H2O + 4 H(+)(in) = ADP + phosphate + 5 H(+)(out). Its function is as follows. Catalytic subunit of the V1 complex of vacuolar(H+)-ATPase (V-ATPase), a multisubunit enzyme composed of a peripheral complex (V1) that hydrolyzes ATP and a membrane integral complex (V0) that translocates protons. V-ATPase is responsible for acidifying and maintaining the pH of intracellular compartments. Mediates oxidative stress response, filamentous growth, and plays an important role in virulence. In Candida albicans (strain SC5314 / ATCC MYA-2876) (Yeast), this protein is V-type proton ATPase catalytic subunit A.